We begin with the raw amino-acid sequence, 347 residues long: Acetylglutamate kinase, chloroplastic (347 aa).

A chloroplast-targeting transit peptide spans 1-50; it reads MATVTSNASPKSFSFTVSNPFKTLIPNKSPSLCYPTRNKNHHRLGFSIKA. The residue at position 51 (T51) is an N-acetylthreonine. 94 to 95 is an ATP binding site; sequence GA. N-acetyl-L-glutamate contacts are provided by residues G126, R148, and 242–245; that span reads NINA. Position 260 (K260) interacts with L-arginine. Residues 265–266 and L271 contribute to the ATP site; that span reads TD. K282 is an L-arginine binding site. 297-305 provides a ligand contact to ATP; sequence KVAGGMIPK. L-arginine is bound by residues 334–337 and G342; that span reads EIMS.

This sequence belongs to the acetylglutamate kinase family. ArgB subfamily. As to quaternary structure, interacts with GLB1. Interaction is dependent of MgATP and inhibited by 2-oxoglutarate, arginine, glutamate, citrate, and oxaloacetate.

It localises to the plastid. It is found in the chloroplast stroma. The enzyme catalyses N-acetyl-L-glutamate + ATP = N-acetyl-L-glutamyl 5-phosphate + ADP. The protein operates within amino-acid biosynthesis; L-arginine biosynthesis; N(2)-acetyl-L-ornithine from L-glutamate: step 2/4. With respect to regulation, inhibited by arginine. Inhibition is relieved by binding to GLB1. Functionally, involved in the arginine biosynthetic pathway via the intermediate compound ornithine. This is Acetylglutamate kinase, chloroplastic from Arabidopsis thaliana (Mouse-ear cress).